The following is a 238-amino-acid chain: CD63 antigen (238 aa).

Residues Ala-2–Lys-11 lie on the Cytoplasmic side of the membrane. Residues Phe-12 to Gly-32 traverse the membrane as a helical segment. Residues Val-33–Ser-51 lie on the Extracellular side of the membrane. Residues Leu-52–Cys-72 traverse the membrane as a helical segment. At Cys-73–Cys-81 the chain is on the cytoplasmic side. Residues Leu-82–Ile-102 traverse the membrane as a helical segment. Residues Ala-103–Val-203 are Extracellular-facing. N-linked (GlcNAc...) asparagine glycosylation is found at Asn-130, Asn-150, and Asn-172. Residues Leu-204 to Ser-224 form a helical membrane-spanning segment. Residues Cys-225–Met-238 lie on the Cytoplasmic side of the membrane. The Lysosomal targeting motif motif lies at Gly-234 to Met-238.

It belongs to the tetraspanin (TM4SF) family. As to quaternary structure, interacts with TIMP1 and ITGB1 and recruits TIMP1 to ITGB1. Interacts with CD9. Identified in a complex with CD9 and ITGB3. Interacts with PMEL. Interacts with KDR/VEGFR2; identified in a complex with ITGB1 and KDR/VEGFR2 and is required to recruit KDR to ITGB1 complexes. Interacts with SYT7. Post-translationally, palmitoylated at a low, basal level in unstimulated platelets. The level of palmitoylation increases when platelets are activated by thrombin (in vitro). Detected in mast cells and platelets (at protein level).

Its subcellular location is the cell membrane. The protein resides in the lysosome membrane. The protein localises to the late endosome membrane. It localises to the endosome. It is found in the multivesicular body. Its subcellular location is the melanosome. The protein resides in the secreted. The protein localises to the extracellular exosome. It localises to the cell surface. Its function is as follows. Functions as a cell surface receptor for TIMP1 and plays a role in the activation of cellular signaling cascades. Plays a role in the activation of ITGB1 and integrin signaling, leading to the activation of AKT, FAK/PTK2 and MAP kinases. Promotes cell survival, reorganization of the actin cytoskeleton, cell adhesion, spreading and migration, via its role in the activation of AKT and FAK/PTK2. Plays a role in VEGFA signaling via its role in regulating the internalization of KDR/VEGFR2. Plays a role in intracellular vesicular transport processes, and is required for normal trafficking of the PMEL luminal domain that is essential for the development and maturation of melanocytes. Plays a role in the adhesion of leukocytes onto endothelial cells via its role in the regulation of SELP trafficking. May play a role in mast cell degranulation in response to Ms4a2/FceRI stimulation, but not in mast cell degranulation in response to other stimuli. This Rattus norvegicus (Rat) protein is CD63 antigen (Cd63).